The sequence spans 213 residues: Small ribosomal subunit protein uS3c (213 aa).

The KH type-2 domain occupies Ile39 to Gln109.

This sequence belongs to the universal ribosomal protein uS3 family. Part of the 30S ribosomal subunit.

Its subcellular location is the plastid. The protein resides in the chloroplast. The chain is Small ribosomal subunit protein uS3c (rps3) from Mesostigma viride (Green alga).